Consider the following 445-residue polypeptide: MVRMEDIISLAKRKGFVFQSSEVYGGLSGVWDYGPLGIELKENIKREWWKSMVYLHENIVGLDSAIFMRSEIWKASGHIDGFSDSMVDCKDCKSRFRADFVDLSKNCPNCKVGNNFTSPRNFNLMFKTHIGVVEDSSSEIYLRPETAQGIFVNFRNVLDSSRLKIPFGIAQVGKAFRNEIVAKNFIFRTCEFEQMEMQFFVHPKQIDEWFCYWQQNRMNFFIETLKIRPDRLRLKAHNSTELAHYAKSAFDIEYEFPFGFQEIEGIHNRGNYDLTQHSKFSNNSKVFEYHDLLTKERYVPYVIETSAGLTRSVLMTLCDAYSEEELSDGDKRIVLRLHPKLAPYKIAIFPLVKKVELVEVARRIYVELCDDFHIFYDDSGTIGKRYRRQDEIGTPYCVTVDYNTIEDETVTVRERNNMTQKRIFINDLYSYIKTEILNYKEDVNK.

Substrate is bound by residues Arg-97 and Glu-145. ATP-binding positions include Arg-177 to Glu-179, Phe-187 to Phe-192, Glu-262 to Ile-263, and Gly-308 to Arg-311. Residue Phe-192–Glu-196 coordinates substrate. Glu-304–Gly-308 contacts substrate.

This sequence belongs to the class-II aminoacyl-tRNA synthetase family. In terms of assembly, homodimer.

The protein localises to the cytoplasm. It carries out the reaction tRNA(Gly) + glycine + ATP = glycyl-tRNA(Gly) + AMP + diphosphate. Functionally, catalyzes the attachment of glycine to tRNA(Gly). The chain is Glycine--tRNA ligase from Borreliella afzelii (strain PKo) (Borrelia afzelii).